The chain runs to 354 residues: Methylthioribose-1-phosphate isomerase (354 aa).

Residues 58–60 (RGA), arginine 101, and glutamine 204 contribute to the substrate site. Aspartate 245 (proton donor) is an active-site residue. 255–256 (NK) contributes to the substrate binding site.

It belongs to the eIF-2B alpha/beta/delta subunits family. MtnA subfamily.

It catalyses the reaction 5-(methylsulfanyl)-alpha-D-ribose 1-phosphate = 5-(methylsulfanyl)-D-ribulose 1-phosphate. The protein operates within amino-acid biosynthesis; L-methionine biosynthesis via salvage pathway; L-methionine from S-methyl-5-thio-alpha-D-ribose 1-phosphate: step 1/6. Its function is as follows. Catalyzes the interconversion of methylthioribose-1-phosphate (MTR-1-P) into methylthioribulose-1-phosphate (MTRu-1-P). This chain is Methylthioribose-1-phosphate isomerase, found in Xylella fastidiosa (strain M12).